The chain runs to 114 residues: ATP-dependent Clp protease adapter protein ClpS (114 aa).

The protein belongs to the ClpS family. Binds to the N-terminal domain of the chaperone ClpA.

Functionally, involved in the modulation of the specificity of the ClpAP-mediated ATP-dependent protein degradation. The polypeptide is ATP-dependent Clp protease adapter protein ClpS (Bdellovibrio bacteriovorus (strain ATCC 15356 / DSM 50701 / NCIMB 9529 / HD100)).